The sequence spans 139 residues: Mitochondrial intermembrane space import and assembly protein 40 (139 aa).

3 disulfides stabilise this stretch: cysteine 53–cysteine 55, cysteine 64–cysteine 97, and cysteine 74–cysteine 87. The CHCH domain maps to 61 to 105 (SGPCGEQFKSAFSCFHYSTEDIKGSDCIDQFRAMQECMQKYPDLY). 2 short sequence motifs (cx9C motif) span residues 64–74 (CGEQFKSAFSC) and 87–97 (CIDQFRAMQEC). The interval 102-139 (PDLYPQDEEEEEEAKPVEPVEETADTKVSAAKEQGTSS) is disordered. The segment covering 106 to 124 (PQDEEEEEEAKPVEPVEET) has biased composition (acidic residues).

Monomer. Can form homooligomers. Interacts with GFER and forms transient disulfide bonds with GFER. Interacts with MICU1. Interacts with COX19 forming transient intermolecular disulfide bridges. Interacts with COA7 through transient intermolecular disulfide bonds. Interacts with AIFM1; the interaction increases in presence of NADH. Interacts with NDUFB10. In terms of processing, forms intrachain disulfide bridges, but exists in different redox states. In terms of tissue distribution, widely expressed. Present at high level in liver and kidney, followed by lung, brain, heart and spleen (at protein level).

It is found in the mitochondrion intermembrane space. Its function is as follows. Central component of a redox-sensitive mitochondrial intermembrane space import machinery which is required for the biogenesis of respiratory chain complexes. Functions as chaperone and catalyzes the formation of disulfide bonds in substrate proteins, such as COX17, COX19, MICU1 and COA7. Required for the import and folding of small cysteine-containing proteins (small Tim) in the mitochondrial intermembrane space (IMS). Required for the import of COA7 in the IMS. Precursor proteins to be imported into the IMS are translocated in their reduced form into the mitochondria. The oxidized form of CHCHD4/MIA40 forms a transient intermolecular disulfide bridge with the reduced precursor protein, resulting in oxidation of the precursor protein that now contains an intramolecular disulfide bond and is able to undergo folding in the IMS. Reduced CHCHD4/MIA40 is then reoxidized by GFER/ERV1 via a disulfide relay system. Mediates formation of disulfide bond in MICU1 in the IMS, promoting formation of the MICU1-MICU2 heterodimer that regulates mitochondrial calcium uptake. The protein is Mitochondrial intermembrane space import and assembly protein 40 (Chchd4) of Mus musculus (Mouse).